Consider the following 542-residue polypeptide: Glutamyl-tRNA(Gln) amidotransferase subunit A, mitochondrial (542 aa).

Residues lysine 55 and serine 143 each act as charge relay system in the active site. The Acyl-ester intermediate role is filled by serine 167.

The protein belongs to the amidase family. GatA subfamily. Subunit of the heterotrimeric GatCAB amidotransferase (AdT) complex, composed of A, B and C subunits.

The protein localises to the mitochondrion. The enzyme catalyses L-glutamyl-tRNA(Gln) + L-glutamine + ATP + H2O = L-glutaminyl-tRNA(Gln) + L-glutamate + ADP + phosphate + H(+). Functionally, allows the formation of correctly charged Gln-tRNA(Gln) through the transamidation of misacylated Glu-tRNA(Gln) in the mitochondria. The reaction takes place in the presence of glutamine and ATP through an activated gamma-phospho-Glu-tRNA(Gln). This is Glutamyl-tRNA(Gln) amidotransferase subunit A, mitochondrial from Neurospora crassa (strain ATCC 24698 / 74-OR23-1A / CBS 708.71 / DSM 1257 / FGSC 987).